Reading from the N-terminus, the 258-residue chain is Short-chain dehydrogenase/reductase aba4 (258 aa).

NADP(+) contacts are provided by Ile20, Asp66, and Lys130. Active-site proton donor residues include Ser146 and Tyr160. 4 residues coordinate NADP(+): Tyr160, Lys164, Ile193, and Thr195. Lys164 (lowers pKa of active site Tyr) is an active-site residue.

Belongs to the short-chain dehydrogenases/reductases (SDR) family.

It participates in hormone biosynthesis. Functionally, short-chain dehydrogenase/reductase; part of the gene cluster that mediates the biosynthesis of abscisic acid (ABA), a phytohormone that acts antagonistically toward salicylic acid (SA), jasmonic acid (JA) and ethylene (ETH) signaling, to impede plant defense responses. The first step of the pathway catalyzes the reaction from farnesyl diphosphate to alpha-ionylideneethane performed by the alpha-ionylideneethane synthase aba3 via a three-step reaction mechanism involving 2 neutral intermediates, beta-farnesene and allofarnesene. The cytochrome P450 monooxygenase aba1 might then be involved in the conversion of alpha-ionylideneethane to alpha-ionylideneacetic acid. Alpha-ionylideneacetic acid is further converted to abscisic acid in 2 steps involving the cytochrome P450 monooxygenase aba2 and the short-chain dehydrogenase/reductase aba4, via the intermediates 1'-deoxy-ABA or 1',4'-trans-diol-ABA, depending on the order of action of these 2 enzymes. Aba2 is responsible for the hydroxylation of carbon atom C-1' and aba4 might be involved in the oxidation of the C-4' carbon atom. This Botryotinia fuckeliana (strain B05.10) (Noble rot fungus) protein is Short-chain dehydrogenase/reductase aba4.